Reading from the N-terminus, the 327-residue chain is Metaxin-1 homolog (327 aa).

The helical transmembrane segment at 281–301 threads the bilayer; sequence IVAGVGAVLAMGAFAAWRGIY.

Belongs to the metaxin family. As to quaternary structure, associates with the mitochondrial contact site and cristae organizing system (MICOS) complex (also known as MINOS or MitOS complex).

The protein resides in the mitochondrion outer membrane. In terms of biological role, involved in transport of proteins into the mitochondrion. Essential for embryonic development. This is Metaxin-1 homolog from Drosophila melanogaster (Fruit fly).